We begin with the raw amino-acid sequence, 220 residues long: Octanoyltransferase (220 aa).

A BPL/LPL catalytic domain is found at 36-212; the sequence is ADSPDQFWLV…CLARQLGRRL (177 aa). Residues 75 to 82, 142 to 144, and 155 to 157 each bind substrate; these read RGGQVTYH, SLG, and GVA. The active-site Acyl-thioester intermediate is Cys-173.

It belongs to the LipB family.

The protein resides in the cytoplasm. It carries out the reaction octanoyl-[ACP] + L-lysyl-[protein] = N(6)-octanoyl-L-lysyl-[protein] + holo-[ACP] + H(+). Its pathway is protein modification; protein lipoylation via endogenous pathway; protein N(6)-(lipoyl)lysine from octanoyl-[acyl-carrier-protein]: step 1/2. Catalyzes the transfer of endogenously produced octanoic acid from octanoyl-acyl-carrier-protein onto the lipoyl domains of lipoate-dependent enzymes. Lipoyl-ACP can also act as a substrate although octanoyl-ACP is likely to be the physiological substrate. The protein is Octanoyltransferase of Chromohalobacter salexigens (strain ATCC BAA-138 / DSM 3043 / CIP 106854 / NCIMB 13768 / 1H11).